A 428-amino-acid polypeptide reads, in one-letter code: MESLTLQPIVHIEGTINLPGSKSVSNRALLLAALAKGKTRLTNLLDSDDIRHMLNALTALGVQYQLSNNNTVCDIEGLAGSFHPQQPLELFLGNAGTAMRPLAAALSLGEHDIVLTGEPRMKERPIGHLVDALRQGGAKIDYLEQTDYPPLRVCGGFSGGSVDVDGTVSSQFLTALLMMAPLAQQDTTITIKGELVSKPYIDITLALINTFGGEIENQNYQRFMIKGGQQYQSPGKYLVEGDASSASYFLAAAAIKGGIVRVTGIGKNSLQGDIHFASVLEKMGATIRWGDDYIECERGKLKGIDMDMNTIPDAAMTIATTALFAEGETTIRNIYNWRVKETDRLSAMATELRKVGAMVDEGRDYLTVIPPKQLTTAEIKTYNDHRIAMCFSLVALSNTPITILDPGCTAKTFPDYFEKLASISHAKV.

3 residues coordinate 3-phosphoshikimate: lysine 22, serine 23, and arginine 27. Lysine 22 is a phosphoenolpyruvate binding site. The phosphoenolpyruvate site is built by glycine 96 and arginine 124. Residues serine 169, serine 170, glutamine 171, serine 197, aspartate 313, asparagine 336, and lysine 340 each coordinate 3-phosphoshikimate. Glutamine 171 contacts phosphoenolpyruvate. Aspartate 313 functions as the Proton acceptor in the catalytic mechanism. Phosphoenolpyruvate is bound by residues arginine 344, arginine 386, and lysine 411.

The protein belongs to the EPSP synthase family. Monomer.

The protein localises to the cytoplasm. It catalyses the reaction 3-phosphoshikimate + phosphoenolpyruvate = 5-O-(1-carboxyvinyl)-3-phosphoshikimate + phosphate. The protein operates within metabolic intermediate biosynthesis; chorismate biosynthesis; chorismate from D-erythrose 4-phosphate and phosphoenolpyruvate: step 6/7. Catalyzes the transfer of the enolpyruvyl moiety of phosphoenolpyruvate (PEP) to the 5-hydroxyl of shikimate-3-phosphate (S3P) to produce enolpyruvyl shikimate-3-phosphate and inorganic phosphate. The protein is 3-phosphoshikimate 1-carboxyvinyltransferase of Proteus mirabilis (strain HI4320).